The following is a 219-amino-acid chain: Tritrans,polycis-undecaprenyl-diphosphate synthase (geranylgeranyl-diphosphate specific) (219 aa).

Aspartate 12 is an active-site residue. Mg(2+) is bound at residue aspartate 12. Residues 13–16 (GNRR), tryptophan 17, and 59–61 (SRD) contribute to the substrate site. Asparagine 62 (proton acceptor) is an active-site residue. Residues arginine 66, arginine 168, and 174-176 (RLS) contribute to the substrate site. Glutamate 187 contacts Mg(2+).

This sequence belongs to the UPP synthase family. As to quaternary structure, homodimer. Mg(2+) is required as a cofactor.

The enzyme catalyses geranylgeranyl diphosphate + 7 isopentenyl diphosphate = tri-trans,hepta-cis-undecaprenyl diphosphate + 7 diphosphate. In terms of biological role, catalyzes the sequential condensation of isopentenyl diphosphate (IPP) with geranylgeranyl diphosphate (GGPP) to yield (2Z,6Z,10Z,14Z,18Z,22Z,26Z,30E,34E,38E)-undecaprenyl diphosphate (tritrans,heptacis-UPP). It is probably the precursor of glycosyl carrier lipids. The chain is Tritrans,polycis-undecaprenyl-diphosphate synthase (geranylgeranyl-diphosphate specific) from Aeropyrum pernix (strain ATCC 700893 / DSM 11879 / JCM 9820 / NBRC 100138 / K1).